The following is a 430-amino-acid chain: BSD domain-containing protein 1 (430 aa).

Phosphoserine is present on residues S92 and S166. The 53-residue stretch at 146–198 folds into the BSD domain; it reads WLSQFCLEEKKGEISELLVGSPSIRALYTKMVPAAVSHSEFWHRYFYKVHQLE. Disordered stretches follow at residues 247–298 and 319–398; these read STFP…APEA and LAVD…WEKD. The segment covering 276 to 291 has biased composition (polar residues); sequence PSESSESISLVTQIAN. A compositionally biased stretch (basic and acidic residues) spans 350 to 367; sequence PPARVETLREEAPTDLRV. T356 carries the post-translational modification Phosphothreonine. Polar residues predominate over residues 371–390; sequence NSDSGKSTPSNNGKKGSSTD. Residues S387, S388, and S418 each carry the phosphoserine modification.

The chain is BSD domain-containing protein 1 (BSDC1) from Homo sapiens (Human).